Reading from the N-terminus, the 349-residue chain is SUMO-activating enzyme subunit 1 (349 aa).

The residue at position 1 (Met1) is an N-acetylmethionine. At Val2 the chain carries N-acetylvaline; in SUMO-activating enzyme subunit 1, N-terminally processed. Ser15 carries the post-translational modification Phosphoserine. Lys201 carries the post-translational modification N6-acetyllysine.

It belongs to the ubiquitin-activating E1 family. As to quaternary structure, heterodimer of SAE1 and UBA2/SAE2. The heterodimer corresponds to the two domains that are encoded on a single polypeptide chain in ubiquitin-activating enzyme E1. Interacts with UBE2I.

The protein localises to the nucleus. It participates in protein modification; protein sumoylation. In terms of biological role, the heterodimer acts as an E1 ligase for SUMO1, SUMO2, SUMO3, and probably SUMO4. It mediates ATP-dependent activation of SUMO proteins followed by formation of a thioester bond between a SUMO protein and a conserved active site cysteine residue on UBA2/SAE2. This Rattus norvegicus (Rat) protein is SUMO-activating enzyme subunit 1 (Sae1).